A 556-amino-acid polypeptide reads, in one-letter code: MPRGQKSKARAREKRRLVQDEAQELQDAQAKAGEKGKSPSCSNQDSGDAVASTSTAGFPQKSKSQGEAPTTTARKGGACRRSRKSTRGPREESTSCTRVPRFSENPQNDLLTRKTGMLMQYLLCKYKMKQPASKGEMLKVINRRFKEQLPEILKKASERIQLVFGLEVKEIKPNGGYYTLVSKLDPSVGNALTTSLPFPQNGLLMPLLGVIFLNGNRASEAEIWEFLNVLGIYDGKVHIIFGEPRKLITRDLVKEKYLVYQKEANSDPPSFEFLWGPRAYAETTKMKILEFLAEVNETVPQAFPTHYEEALRDQEERAQAEAVGSPGTSAKDKAEAKVTLVDSSCKYQAESKVTLVDSSCKDQAESKVTLVDPSCKDNAKSKVTLGSSRKYKAKSKVPLVDSSCKDQAESKVTLVDSCKDQAESKVTLVDSSCKDQAESKVTLVDSSCKDQAESKVTLVDPSCKDKAKSKVTLGSSHKYKAKSKVTLVDSSCKDQAESKVTLVDSSCKDQAESKVTLVDPSCKDNAKSKVTLGSSRKYKAKSKVPLVDSSGKDKAV.

The segment covering 1–15 (MPRGQKSKARAREKR) has biased composition (basic residues). The interval 1-110 (MPRGQKSKAR…RFSENPQNDL (110 aa)) is disordered. Positions 39 to 73 (PSCSNQDSGDAVASTSTAGFPQKSKSQGEAPTTTA) are enriched in polar residues. Residues 77–87 (GACRRSRKSTR) show a composition bias toward basic residues. The region spanning 111–310 (LTRKTGMLMQ…QAFPTHYEEA (200 aa)) is the MAGE domain. Residues 315–335 (EERAQAEAVGSPGTSAKDKAE) are disordered. Residue Ser325 is modified to Phosphoserine. A run of 15 repeats spans residues 334-348 (AEAK…CKYQ), 349-363 (AESK…CKDQ), 364-378 (AESK…CKDN), 379-392 (AKSK…RKYK), 393-407 (AKSK…CKDQ), 408-421 (AESK…CKDQ), 422-436 (AESK…CKDQ), 437-451 (AESK…CKDQ), 452-466 (AESK…CKDK), 467-480 (AKSK…HKYK), 481-495 (AKSK…CKDQ), 496-510 (AESK…CKDQ), 511-525 (AESK…CKDN), 526-539 (AKSK…RKYK), and 540-554 (AKSK…GKDK). Positions 334–554 (AEAKVTLVDS…PLVDSSGKDK (221 aa)) are 15 X 15 AA approximate tandem repeats.

Expressed in testis (at protein level).

Its subcellular location is the cytoplasm. This Mus musculus (Mouse) protein is Melanoma-associated antigen B4.